We begin with the raw amino-acid sequence, 210 residues long: MSAKSAISKEIFAPLDERMLGAVQVKRRTKKKIPFLATGGQGEYLTYICLSVTNKKPTQASITKVKQFEGSTSFVRRSQWMLEQLRQVNGIDPNGDSAEFDLLFENAFDQWVASTASEKCTFFQILHHTCQRYLTDRKPEFINCQSKIMGGNSILHSAADSVTSAVQKASQALNERGERLGRAEEKTEDLKNSAQQFAETAHKLAMKHKC.

At serine 2 the chain carries N-acetylserine. The 60-residue stretch at 151–210 folds into the v-SNARE coiled-coil homology domain; the sequence is GNSILHSAADSVTSAVQKASQALNERGERLGRAEEKTEDLKNSAQQFAETAHKLAMKHKC.

In terms of assembly, part of a ternary complex containing SNAP25 and STX1A that can be dissociated by NAPA and NSF. Interacts with STX4A. Detected at low levels in brain, and at very low levels in heart, adrenal gland, testis, liver and kidney.

It is found in the cytoplasm. It localises to the membrane. In terms of biological role, forms non-fusogenic complexes with SNAP25 and STX1A and may thereby modulate the formation of functional SNARE complexes and exocytosis. This chain is Syntaxin-binding protein 6 (STXBP6), found in Homo sapiens (Human).